The sequence spans 552 residues: Ferry endosomal RAB5 effector complex subunit 3 (552 aa).

The disordered stretch occupies residues 383–403 (LKESLDSGNQNGGNDDKTKNA).

Component of the FERRY complex composed of five subunits, TBCK, PPP1R21, FERRY3, CRYZL1 and GATD1 with a ratio of 1:2:1:2:4, respectively.

Its subcellular location is the cytoplasm. It is found in the early endosome. Component of the FERRY complex (Five-subunit Endosomal Rab5 and RNA/ribosome intermediary). The FERRY complex directly interacts with mRNAs and RAB5A, and functions as a RAB5A effector involved in the localization and the distribution of specific mRNAs most likely by mediating their endosomal transport. The complex recruits mRNAs and ribosomes to early endosomes through direct mRNA-interaction. Plays a role in mast cell degranulation. This Homo sapiens (Human) protein is Ferry endosomal RAB5 effector complex subunit 3.